Reading from the N-terminus, the 664-residue chain is Exoribonuclease 2 (664 aa).

The 329-residue stretch at 193 to 521 (RIDMTHIPFV…INHRMLKALI (329 aa)) folds into the RNB domain. Positions 568 to 650 (QTLFTGEIFD…ENRSLVAKPT (83 aa)) constitute an S1 motif domain.

Belongs to the RNR ribonuclease family. RNase II subfamily.

It localises to the cytoplasm. It catalyses the reaction Exonucleolytic cleavage in the 3'- to 5'-direction to yield nucleoside 5'-phosphates.. In terms of biological role, involved in mRNA degradation. Hydrolyzes single-stranded polyribonucleotides processively in the 3' to 5' direction. The chain is Exoribonuclease 2 from Vibrio vulnificus (strain CMCP6).